We begin with the raw amino-acid sequence, 209 residues long: ATP-dependent Clp protease proteolytic subunit 2 (209 aa).

Ser106 functions as the Nucleophile in the catalytic mechanism. His131 is an active-site residue.

Belongs to the peptidase S14 family. As to quaternary structure, fourteen ClpP subunits assemble into 2 heptameric rings which stack back to back to give a disk-like structure with a central cavity, resembling the structure of eukaryotic proteasomes.

It localises to the cytoplasm. It catalyses the reaction Hydrolysis of proteins to small peptides in the presence of ATP and magnesium. alpha-casein is the usual test substrate. In the absence of ATP, only oligopeptides shorter than five residues are hydrolyzed (such as succinyl-Leu-Tyr-|-NHMec, and Leu-Tyr-Leu-|-Tyr-Trp, in which cleavage of the -Tyr-|-Leu- and -Tyr-|-Trp bonds also occurs).. Its function is as follows. Cleaves peptides in various proteins in a process that requires ATP hydrolysis. Has a chymotrypsin-like activity. Plays a major role in the degradation of misfolded proteins. In Mesorhizobium japonicum (strain LMG 29417 / CECT 9101 / MAFF 303099) (Mesorhizobium loti (strain MAFF 303099)), this protein is ATP-dependent Clp protease proteolytic subunit 2.